We begin with the raw amino-acid sequence, 545 residues long: Glucose-6-phosphate isomerase (545 aa).

Glutamate 353 serves as the catalytic Proton donor. Active-site residues include histidine 384 and lysine 510.

The protein belongs to the GPI family.

The protein localises to the cytoplasm. It carries out the reaction alpha-D-glucose 6-phosphate = beta-D-fructose 6-phosphate. The protein operates within carbohydrate biosynthesis; gluconeogenesis. It participates in carbohydrate degradation; glycolysis; D-glyceraldehyde 3-phosphate and glycerone phosphate from D-glucose: step 2/4. Catalyzes the reversible isomerization of glucose-6-phosphate to fructose-6-phosphate. This Aromatoleum aromaticum (strain DSM 19018 / LMG 30748 / EbN1) (Azoarcus sp. (strain EbN1)) protein is Glucose-6-phosphate isomerase.